A 675-amino-acid chain; its full sequence is Methionine--tRNA ligase (675 aa).

The short motif at Pro15–His25 is the 'HIGH' region element. The Zn(2+) site is built by Cys146, Cys149, Cys159, and Cys162. Residues Lys332 to Ser336 carry the 'KMSKS' region motif. Lys335 is a binding site for ATP. A tRNA-binding domain is found at Asp573–Lys675.

Belongs to the class-I aminoacyl-tRNA synthetase family. MetG type 1 subfamily. As to quaternary structure, homodimer. It depends on Zn(2+) as a cofactor.

It localises to the cytoplasm. The enzyme catalyses tRNA(Met) + L-methionine + ATP = L-methionyl-tRNA(Met) + AMP + diphosphate. Functionally, is required not only for elongation of protein synthesis but also for the initiation of all mRNA translation through initiator tRNA(fMet) aminoacylation. In Photorhabdus laumondii subsp. laumondii (strain DSM 15139 / CIP 105565 / TT01) (Photorhabdus luminescens subsp. laumondii), this protein is Methionine--tRNA ligase.